Here is a 997-residue protein sequence, read N- to C-terminus: FHIP family protein CPIJ015043 (997 aa).

Disordered regions lie at residues D558–Q579 and N759–A922. Over residues Q569–Q579 the composition is skewed to low complexity. The span at G763 to G780 shows a compositional bias: gly residues. Low complexity-rich tracts occupy residues S781–P792 and G830–S889. Positions I911–A922 are enriched in gly residues.

The protein belongs to the FHIP family.

In Culex quinquefasciatus (Southern house mosquito), this protein is FHIP family protein CPIJ015043.